The sequence spans 112 residues: uncharacterized protein (112 aa).

A mitochondrion-targeting transit peptide spans 1 to 21 (MYLSAQLMRTVTASHLTLRAL).

The protein resides in the mitochondrion. This is an uncharacterized protein from Saccharomyces cerevisiae (strain ATCC 204508 / S288c) (Baker's yeast).